We begin with the raw amino-acid sequence, 1162 residues long: Transcription termination factor 2 (1162 aa).

Residues cysteine 6, histidine 9, cysteine 32, and cysteine 37 each contribute to the Zn(2+) site. The GRF-type zinc-finger motif lies at 6 to 46 (CPEHGTFCFLKTGVRDGPNKGKSFYVCRADTCSFVRATDIP). Disordered stretches follow at residues 97 to 116 (PDSK…ETFH), 142 to 358 (IKGE…EEDD), 388 to 407 (DRSV…KVEP), and 459 to 503 (LSPE…TQPV). The segment covering 105 to 116 (SNKSQHASETFH) has biased composition (polar residues). Residues 142 to 178 (IKGEGEEKKADKKQREKGDQLFDQKKEQKPEMMEKDL) are compositionally biased toward basic and acidic residues. Residue lysine 143 forms a Glycyl lysine isopeptide (Lys-Gly) (interchain with G-Cter in SUMO2) linkage. Residues 219-232 (IKSQQCQGNELTRP) are compositionally biased toward polar residues. Low complexity predominate over residues 233–245 (SASSQEKSSGKSQ). Basic and acidic residues predominate over residues 246–258 (DVQRESEPLREKV). A compositionally biased stretch (polar residues) spans 261-274 (LLPQNVHSHNSISK). A compositionally biased stretch (low complexity) spans 323 to 338 (PAPGGPAAQAAPAAPG). Polar residues predominate over residues 459–485 (LSPEQGTNEKSNSQVPQQSHFTKTTTG). Serine 460 is modified (phosphoserine). Residues 583-786 (WRESQKPQGG…YSLLKFLRCS (204 aa)) form the Helicase ATP-binding domain. Residue 596-603 (DDMGLGKT) coordinates ATP. A DEAH box motif is present at residues 737 to 740 (DEAH). The segment at 871–890 (KRHESRGNQSGRSPNNPFSR) is disordered. A compositionally biased stretch (polar residues) spans 877–888 (GNQSGRSPNNPF). A phosphoserine mark is found at serine 883 and serine 908. One can recognise a Helicase C-terminal domain in the interval 995 to 1157 (SLLAELEAIQ…VTKLTLADLR (163 aa)).

This sequence belongs to the SNF2/RAD54 helicase family. In terms of assembly, interacts with CDC5L. Part of the spliceosome.

It is found in the cytoplasm. The protein resides in the nucleus. DsDNA-dependent ATPase which acts as a transcription termination factor by coupling ATP hydrolysis with removal of RNA polymerase II from the DNA template. May contribute to mitotic transcription repression. May also be involved in pre-mRNA splicing. This chain is Transcription termination factor 2 (TTF2), found in Homo sapiens (Human).